Reading from the N-terminus, the 230-residue chain is Heptaprenylglyceryl phosphate synthase (230 aa).

Lysine 12 contributes to the sn-glycerol 1-phosphate binding site. 2 residues coordinate Mg(2+): aspartate 14 and threonine 40. Residues tyrosine 159–glycine 164, glycine 189, and glycine 209–aspartate 210 contribute to the sn-glycerol 1-phosphate site.

The protein belongs to the GGGP/HepGP synthase family. Group I subfamily. Homodimer. Mg(2+) serves as cofactor.

The catalysed reaction is sn-glycerol 1-phosphate + all-trans-heptaprenyl diphosphate = 3-heptaprenyl-sn-glycero-1-phosphate + diphosphate. It participates in membrane lipid metabolism; glycerophospholipid metabolism. Its function is as follows. Prenyltransferase that catalyzes in vivo the transfer of the heptaprenyl moiety of heptaprenyl pyrophosphate (HepPP; 35 carbon atoms) to the C3 hydroxyl of sn-glycerol-1-phosphate (G1P), producing heptaprenylglyceryl phosphate (HepGP). This reaction is an ether-bond-formation step in the biosynthesis of archaea-type G1P-based membrane lipids found in Bacillales. The sequence is that of Heptaprenylglyceryl phosphate synthase from Staphylococcus epidermidis (strain ATCC 35984 / DSM 28319 / BCRC 17069 / CCUG 31568 / BM 3577 / RP62A).